We begin with the raw amino-acid sequence, 93 residues long: RNA-binding protein Hfq (93 aa).

The Sm domain maps to 11–71 (DVFLNHVRKS…ISTVMPGAPI (61 aa)).

This sequence belongs to the Hfq family. Homohexamer.

In terms of biological role, RNA chaperone that binds small regulatory RNA (sRNAs) and mRNAs to facilitate mRNA translational regulation in response to envelope stress, environmental stress and changes in metabolite concentrations. Also binds with high specificity to tRNAs. The chain is RNA-binding protein Hfq from Granulibacter bethesdensis (strain ATCC BAA-1260 / CGDNIH1).